The primary structure comprises 606 residues: Zinc finger protein 652 (606 aa).

S57 carries the phosphoserine modification. Positions 71–97 (HLHETEEQPYFRETRAVSDVHAVKEDR) are enriched in basic and acidic residues. Disordered stretches follow at residues 71-113 (HLHE…VSYK) and 130-235 (VSKG…APVQ). The span at 98–109 (ENSDDTEEEEEE) shows a compositional bias: acidic residues. Residue S100 is modified to Phosphoserine. The residue at position 103 (T103) is a Phosphothreonine. The segment covering 137 to 149 (VSSQSKETPVLKT) has biased composition (polar residues). Acidic residues predominate over residues 152–170 (EEEEEESEEEATDDSNDYG). Positions 171–183 (ENEKQKKKEKIVE) are enriched in basic and acidic residues. The segment covering 184-209 (KVSVTQRRTRRAASVAAATTSPTPRT) has biased composition (low complexity). S197 and S204 each carry phosphoserine. The C2H2-type 1 zinc-finger motif lies at 245 to 268 (LTCEKCPRVFNTRWYLEKHMNVTH). Residues 272 to 294 (QICDKCGKKFVLESELSLHQQTD) form a C2H2-type 2; degenerate zinc finger. 6 consecutive C2H2-type zinc fingers follow at residues 299-322 (IQCV…KIVH), 329-351 (FSCE…MVAH), 357-379 (FTCE…SLQH), 385-407 (FRCE…MSIH), 413-435 (FMCQ…MKTH), and 441-463 (FICE…RRTH). Residues 469-492 (YPCDVCGQRFRFSNMLKAHKEKCF) form a C2H2-type 9; degenerate zinc finger. Residues 498–606 (VNVPPAVQIP…AEKNSSAQHH (109 aa)) form a mediates interaction with CBFA2T3 region.

Belongs to the krueppel C2H2-type zinc-finger protein family. Interacts with CBFA2T3. In terms of tissue distribution, widely expressed with higher expression in breast, prostate, vulva and pancreas.

It is found in the nucleus. Functionally, functions as a transcriptional repressor. This Homo sapiens (Human) protein is Zinc finger protein 652 (ZNF652).